The primary structure comprises 358 residues: G-protein coupled receptor 62 (358 aa).

Topologically, residues 1 to 17 are extracellular; that stretch reads MANGSGLSVTELAGSVG. The N-linked (GlcNAc...) asparagine glycan is linked to asparagine 3. The helical transmembrane segment at 18–38 threads the bilayer; sequence FILAVLVEVGAVLGNGTLLVV. The Cytoplasmic segment spans residues 39–53; it reads VLRTPDLQDAFYLAH. A helical membrane pass occupies residues 54 to 74; that stretch reads LCVVDLLAAASIMPLGLLAAP. Residues 75 to 89 lie on the Extracellular side of the membrane; it reads PGLGTVPLDPSSCRA. Residues 90–110 form a helical membrane-spanning segment; the sequence is ARFLSAALLPACTLGVAALGL. Topologically, residues 111–128 are cytoplasmic; sequence ARYRLIVHPLRPGARPAP. A helical transmembrane segment spans residues 129–149; the sequence is ALVLTAVWSAAALLGALSLLG. At 150-176 the chain is on the extracellular side; sequence PPPAPPPAPARCSVLAGGLGPFRPLWA. A helical transmembrane segment spans residues 177 to 197; the sequence is MLAFALPALLLLAAYGSIFLV. Residues 198 to 234 are Cytoplasmic-facing; the sequence is ARRAALRPPRGTRPRSDSLDSRLSFLPPLRPRLLGGK. Residues 235-255 form a helical membrane-spanning segment; sequence AALAPALAVGQFAACWLPYGC. Residues 256–268 lie on the Extracellular side of the membrane; sequence ACLAPAARAAAAE. A helical membrane pass occupies residues 269-289; it reads ATVTWVAYSAFAAHPFLYGLL. At 290 to 358 the chain is on the cytoplasmic side; it reads QRPVRLALGR…RQTPSVSEAT (69 aa). The interval 334–358 is disordered; the sequence is VLGPSEAPEQARELARQTPSVSEAT.

The protein belongs to the G-protein coupled receptor 1 family. In terms of assembly, homodimer. Forms heterodimer with MTNR1B. Interacts with ARRB1 and ARRB2 in a spontaneous and agonist-independent manner; leading to the internalization of GPR62 in the endosomal compartment. Expressed in the brain and testes. Expressed widely, in the brain, including the cerebral cortex, cerebellum, hippocampus,thalamus and pituitary gland. In the testes, expressed specifically in the germ cells.

The protein resides in the cell membrane. It is found in the endosome membrane. Its function is as follows. Orphan G-protein coupled receptor. Constitutively activates the G(q/11)/inositol phosphate and the G(s)-alpha/cAMP signaling pathways. Has spontaneous activity for beta-arrestin recruitment. Shows a reciprocal regulatory interaction with the melatonin receptor MTNR1B most likely through receptor heteromerization. This Mus musculus (Mouse) protein is G-protein coupled receptor 62 (Gpr62).